Reading from the N-terminus, the 331-residue chain is Glycine betaine/proline betaine-binding periplasmic protein (331 aa).

Positions 1 to 21 (MRHTVIFASAFATLVTASAFA) are cleaved as a signal peptide. Substrate is bound by residues W86, H90, and 161–163 (WGC). C157 and C163 are joined by a disulfide.

The complex is composed of two ATP-binding proteins (ProV), two transmembrane proteins (ProW) and a solute-binding protein (ProX).

Its subcellular location is the periplasm. Part of the ProU ABC transporter complex involved in glycine betaine and proline betaine uptake. Binds glycine betaine and proline betaine with high affinity. The protein is Glycine betaine/proline betaine-binding periplasmic protein (proX) of Salmonella typhimurium (strain LT2 / SGSC1412 / ATCC 700720).